The chain runs to 360 residues: Dual-specificity RNA methyltransferase RlmN (360 aa).

E89 serves as the catalytic Proton acceptor. The 236-residue stretch at 95-330 (DSGRGTLCVS…TRVTRGQDID (236 aa)) folds into the Radical SAM core domain. An intrachain disulfide couples C102 to C333. Positions 109, 113, and 116 each coordinate [4Fe-4S] cluster. Residues 159–160 (GE), S191, 213–215 (SLH), and N290 each bind S-adenosyl-L-methionine. C333 functions as the S-methylcysteine intermediate in the catalytic mechanism.

It belongs to the radical SAM superfamily. RlmN family. [4Fe-4S] cluster is required as a cofactor.

The protein localises to the cytoplasm. The catalysed reaction is adenosine(2503) in 23S rRNA + 2 reduced [2Fe-2S]-[ferredoxin] + 2 S-adenosyl-L-methionine = 2-methyladenosine(2503) in 23S rRNA + 5'-deoxyadenosine + L-methionine + 2 oxidized [2Fe-2S]-[ferredoxin] + S-adenosyl-L-homocysteine. The enzyme catalyses adenosine(37) in tRNA + 2 reduced [2Fe-2S]-[ferredoxin] + 2 S-adenosyl-L-methionine = 2-methyladenosine(37) in tRNA + 5'-deoxyadenosine + L-methionine + 2 oxidized [2Fe-2S]-[ferredoxin] + S-adenosyl-L-homocysteine. Specifically methylates position 2 of adenine 2503 in 23S rRNA and position 2 of adenine 37 in tRNAs. m2A2503 modification seems to play a crucial role in the proofreading step occurring at the peptidyl transferase center and thus would serve to optimize ribosomal fidelity. This chain is Dual-specificity RNA methyltransferase RlmN, found in Alkalilimnicola ehrlichii (strain ATCC BAA-1101 / DSM 17681 / MLHE-1).